The following is a 249-amino-acid chain: uncharacterized protein (249 aa).

Gly-7–Ser-14 contributes to the ATP binding site.

This is an uncharacterized protein from Methanocaldococcus jannaschii (strain ATCC 43067 / DSM 2661 / JAL-1 / JCM 10045 / NBRC 100440) (Methanococcus jannaschii).